Reading from the N-terminus, the 346-residue chain is Acetylpolyamine amidohydrolase 1 (346 aa).

The active-site Proton donor/acceptor is the H161. Zn(2+)-binding residues include D197, H199, and D286.

This sequence belongs to the histone deacetylase family. In terms of assembly, homodimer. Zn(2+) serves as cofactor.

The enzyme catalyses N-acetylputrescine + H2O = putrescine + acetate. It carries out the reaction N-acetylcadaverine + H2O = cadaverine + acetate. The catalysed reaction is N(1)-acetylspermine + H2O = spermine + acetate. It catalyses the reaction N(1)-acetylspermidine + H2O = spermidine + acetate. The protein operates within amine and polyamine metabolism. Its function is as follows. Catalyzes the deacetylation of acetylated polyamines such as N-acetylputrescine, N-acetylcadaverine, N(1)-acetylspermine and N(1)-acetylspermidine. Plays an important role in the metabolism of acetylated polyamines in P.aeruginosa. Is involved in the degradation pathways of N-acetylputrescine and N-acetylcadaverine, that allow P.aeruginosa to utilize these acetylpolyamines as a carbon source under glucose starvation. In vitro, can also hydrolyze artificial trifluoroacetylated and acetylated lysine-derivatives. The chain is Acetylpolyamine amidohydrolase 1 from Pseudomonas aeruginosa (strain ATCC 15692 / DSM 22644 / CIP 104116 / JCM 14847 / LMG 12228 / 1C / PRS 101 / PAO1).